Here is a 103-residue protein sequence, read N- to C-terminus: Large ribosomal subunit protein bL21 (103 aa).

The protein belongs to the bacterial ribosomal protein bL21 family. Part of the 50S ribosomal subunit. Contacts protein L20.

Functionally, this protein binds to 23S rRNA in the presence of protein L20. The protein is Large ribosomal subunit protein bL21 of Tolumonas auensis (strain DSM 9187 / NBRC 110442 / TA 4).